We begin with the raw amino-acid sequence, 239 residues long: Ribosomal RNA small subunit methyltransferase G (239 aa).

Residues Gly-77, Phe-82, 128-129, and Arg-146 each bind S-adenosyl-L-methionine; that span reads AE. Residues 215–239 are disordered; it reads DKKRQTPKKYPRKPGTPNKTPLLEK.

The protein belongs to the methyltransferase superfamily. RNA methyltransferase RsmG family.

Its subcellular location is the cytoplasm. Specifically methylates the N7 position of guanine in position 535 of 16S rRNA. In Staphylococcus aureus (strain USA300), this protein is Ribosomal RNA small subunit methyltransferase G.